The sequence spans 109 residues: uncharacterized protein (109 aa).

3 consecutive transmembrane segments (helical) span residues 16 to 36 (HPHL…EIYF), 52 to 72 (LIVL…LIAL), and 87 to 107 (ILLC…AYPV).

It localises to the cell membrane. This is an uncharacterized protein from Salmonella typhimurium (strain LT2 / SGSC1412 / ATCC 700720).